The chain runs to 286 residues: Pantothenate synthetase (286 aa).

30–37 (MGNLHAGH) provides a ligand contact to ATP. H37 acts as the Proton donor in catalysis. (R)-pantoate is bound at residue Q61. Q61 lines the beta-alanine pocket. Residue 149-152 (GQKD) participates in ATP binding. Q155 contributes to the (R)-pantoate binding site. ATP-binding positions include V178 and 186 to 189 (LSSR).

The protein belongs to the pantothenate synthetase family. In terms of assembly, homodimer.

The protein localises to the cytoplasm. It carries out the reaction (R)-pantoate + beta-alanine + ATP = (R)-pantothenate + AMP + diphosphate + H(+). It participates in cofactor biosynthesis; (R)-pantothenate biosynthesis; (R)-pantothenate from (R)-pantoate and beta-alanine: step 1/1. Functionally, catalyzes the condensation of pantoate with beta-alanine in an ATP-dependent reaction via a pantoyl-adenylate intermediate. In Stutzerimonas stutzeri (strain A1501) (Pseudomonas stutzeri), this protein is Pantothenate synthetase.